The chain runs to 327 residues: GTP 3',8-cyclase (327 aa).

Residues 4–226 enclose the Radical SAM core domain; that stretch reads AFARDIHYLR…LRLGDHPGIR (223 aa). R13 contacts GTP. [4Fe-4S] cluster contacts are provided by C20 and C24. Y26 serves as a coordination point for S-adenosyl-L-methionine. C27 is a binding site for [4Fe-4S] cluster. Residue R63 participates in GTP binding. S-adenosyl-L-methionine is bound at residue G67. T94 provides a ligand contact to GTP. S-adenosyl-L-methionine is bound at residue S118. K155 contributes to the GTP binding site. M189 provides a ligand contact to S-adenosyl-L-methionine. C254 and C257 together coordinate [4Fe-4S] cluster. 259–261 contacts GTP; that stretch reads RLR. [4Fe-4S] cluster is bound at residue C271.

This sequence belongs to the radical SAM superfamily. MoaA family. As to quaternary structure, monomer and homodimer. Requires [4Fe-4S] cluster as cofactor.

The enzyme catalyses GTP + AH2 + S-adenosyl-L-methionine = (8S)-3',8-cyclo-7,8-dihydroguanosine 5'-triphosphate + 5'-deoxyadenosine + L-methionine + A + H(+). It participates in cofactor biosynthesis; molybdopterin biosynthesis. Catalyzes the cyclization of GTP to (8S)-3',8-cyclo-7,8-dihydroguanosine 5'-triphosphate. The protein is GTP 3',8-cyclase of Heliobacterium modesticaldum (strain ATCC 51547 / Ice1).